We begin with the raw amino-acid sequence, 1333 residues long: DNA-directed RNA polymerase subunit beta' (1333 aa).

Positions 60, 62, 75, and 78 each coordinate Zn(2+). Asp535, Asp537, and Asp539 together coordinate Mg(2+). Zn(2+)-binding residues include Cys901, Cys983, Cys990, and Cys993.

Belongs to the RNA polymerase beta' chain family. In terms of assembly, the RNAP catalytic core consists of 2 alpha, 1 beta, 1 beta' and 1 omega subunit. When a sigma factor is associated with the core the holoenzyme is formed, which can initiate transcription. Mg(2+) is required as a cofactor. Zn(2+) serves as cofactor.

The enzyme catalyses RNA(n) + a ribonucleoside 5'-triphosphate = RNA(n+1) + diphosphate. DNA-dependent RNA polymerase catalyzes the transcription of DNA into RNA using the four ribonucleoside triphosphates as substrates. The sequence is that of DNA-directed RNA polymerase subunit beta' from Corynebacterium efficiens (strain DSM 44549 / YS-314 / AJ 12310 / JCM 11189 / NBRC 100395).